The sequence spans 467 residues: Argininosuccinate lyase (467 aa).

The protein belongs to the lyase 1 family. Argininosuccinate lyase subfamily.

The protein localises to the cytoplasm. The catalysed reaction is 2-(N(omega)-L-arginino)succinate = fumarate + L-arginine. It participates in amino-acid biosynthesis; L-arginine biosynthesis; L-arginine from L-ornithine and carbamoyl phosphate: step 3/3. This is Argininosuccinate lyase from Thioalkalivibrio sulfidiphilus (strain HL-EbGR7).